Consider the following 185-residue polypeptide: Elongation factor P (185 aa).

It belongs to the elongation factor P family.

Its subcellular location is the cytoplasm. Its pathway is protein biosynthesis; polypeptide chain elongation. Its function is as follows. Involved in peptide bond synthesis. Stimulates efficient translation and peptide-bond synthesis on native or reconstituted 70S ribosomes in vitro. Probably functions indirectly by altering the affinity of the ribosome for aminoacyl-tRNA, thus increasing their reactivity as acceptors for peptidyl transferase. The polypeptide is Elongation factor P (Aromatoleum aromaticum (strain DSM 19018 / LMG 30748 / EbN1) (Azoarcus sp. (strain EbN1))).